A 397-amino-acid polypeptide reads, in one-letter code: Ubiquitin-like modifier-activating enzyme 5 (397 aa).

Positions 76, 97, 120, 143, and 177 each coordinate ATP. Zn(2+) is bound by residues Cys-219 and Cys-222. The active-site Glycyl thioester intermediate is the Cys-243. Zn(2+) contacts are provided by Cys-296 and Cys-301. A UFM1-interacting sequence (UIS) motif is present at residues 327 to 339; the sequence is IVHEDNDWGIELV. The segment at 340–370 is linker; the sequence is SETTEDELKAASGPVPDLPVGITVAYTIPNK. Positions 382 to 397 match the UFC1-binding sequence (UFC) motif; that stretch reads ESEESLEDLMAKMRNL.

This sequence belongs to the ubiquitin-activating E1 family. UBA5 subfamily. As to quaternary structure, homodimer; homodimerization is required for UFM1 activation. Interacts (via UIS motif) with UFM1; binds UFM1 via a trans-binding mechanism in which UFM1 interacts with distinct sites in both subunits of the UBA5 homodimer. Interacts (via C-terminus) with UFC1.

Its subcellular location is the cytoplasm. The protein localises to the nucleus. It localises to the endoplasmic reticulum membrane. The protein resides in the golgi apparatus. In terms of biological role, E1-like enzyme which specifically catalyzes the first step in ufmylation. Activates UFM1 by first adenylating its C-terminal glycine residue with ATP, and thereafter linking this residue to the side chain of a cysteine residue in E1, yielding a UFM1-E1 thioester and free AMP. Activates UFM1 via a trans-binding mechanism, in which UFM1 interacts with distinct sites in both subunits of the UBA5 homodimer. Trans-binding also promotes stabilization of the UBA5 homodimer, and enhances ATP-binding. Transfer of UFM1 from UBA5 to the E2-like enzyme UFC1 also takes place using a trans mechanism. Ufmylation plays a key role in various processes, such as ribosome recycling, response to DNA damage, interferon response or reticulophagy (also called ER-phagy). The protein is Ubiquitin-like modifier-activating enzyme 5 of Gallus gallus (Chicken).